The following is a 766-amino-acid chain: Pumilio domain-containing protein 12 (766 aa).

Disordered stretches follow at residues 63 to 98 (KKSS…KSKK) and 152 to 197 (AQEE…GDES). A compositionally biased stretch (polar residues) spans 79-88 (SLCSESSFGS). Residues 179–193 (PADDENLESVDEQAG) are compositionally biased toward acidic residues. Positions 245 to 602 (ARAQKCKELW…LYAGITENLY (358 aa)) constitute a PUM-HD domain. Pumilio repeat units follow at residues 313–348 (ELTP…IIIN), 461–496 (SLKD…LIVK), 497–534 (NFKD…VIVS), and 535–571 (ELAN…REIT).

This chain is Pumilio domain-containing protein 12 (puf-12), found in Caenorhabditis elegans.